A 283-amino-acid chain; its full sequence is MTEFTTLLQQGNAWFFIPSAILLGALHGLEPGHSKTMMAAFIIAIKGTIKQAVMLGLAATISHTAVVWLIAFGGMVISKRFTAQSAEPWLQLISAVIIISTAFWMFWRTWRGERNWLENMHEHHHHDHEHHQDHDHDHDHDHDHEHHHHHEHGDNEEYQDAHARAHANDIKRRFDGREVTNWQILLFGLTGGLIPCPAAITVLLICIQLKALTLGATLVVSFSIGLALTLVTVGVGAAISVQQVAKRWSGFNTLAKRAPYFSSLLIGLVGVYMGVHGFMGIMR.

Residues 1–12 are Periplasmic-facing; it reads MTEFTTLLQQGN. Residues 13–33 form a helical membrane-spanning segment; sequence AWFFIPSAILLGALHGLEPGH. The Cytoplasmic portion of the chain corresponds to 34 to 56; that stretch reads SKTMMAAFIIAIKGTIKQAVMLG. The helical transmembrane segment at 57–77 threads the bilayer; that stretch reads LAATISHTAVVWLIAFGGMVI. The Periplasmic portion of the chain corresponds to 78-86; that stretch reads SKRFTAQSA. Residues 87-107 form a helical membrane-spanning segment; it reads EPWLQLISAVIIISTAFWMFW. Residues 108–184 lie on the Cytoplasmic side of the membrane; sequence RTWRGERNWL…DGREVTNWQI (77 aa). A disordered region spans residues 127–162; it reads DHEHHQDHDHDHDHDHDHEHHHHHEHGDNEEYQDAH. Basic and acidic residues-rich tracts occupy residues 129 to 144 and 151 to 162; these read EHHQ…DHDH and EHGDNEEYQDAH. Residues 185–205 traverse the membrane as a helical segment; the sequence is LLFGLTGGLIPCPAAITVLLI. Residues 206–218 are Periplasmic-facing; that stretch reads CIQLKALTLGATL. Residues 219–239 traverse the membrane as a helical segment; the sequence is VVSFSIGLALTLVTVGVGAAI. Topologically, residues 240–260 are cytoplasmic; it reads SVQQVAKRWSGFNTLAKRAPY. Residues 261–281 traverse the membrane as a helical segment; it reads FSSLLIGLVGVYMGVHGFMGI. Residues 282 to 283 lie on the Periplasmic side of the membrane; it reads MR.

This sequence belongs to the NiCoT transporter (TC 2.A.52) family. RcnA subfamily.

The protein localises to the cell inner membrane. Efflux system for nickel and cobalt. The chain is Nickel/cobalt efflux system RcnA (rcnA) from Escherichia coli O157:H7.